The sequence spans 365 residues: tRNA(Met) cytidine acetate ligase (365 aa).

ATP-binding positions include 7–20 (IAEF…HKYL), G96, N152, and R175.

Belongs to the TmcAL family.

It localises to the cytoplasm. It carries out the reaction cytidine(34) in elongator tRNA(Met) + acetate + ATP = N(4)-acetylcytidine(34) in elongator tRNA(Met) + AMP + diphosphate. Catalyzes the formation of N(4)-acetylcytidine (ac(4)C) at the wobble position of elongator tRNA(Met), using acetate and ATP as substrates. First activates an acetate ion to form acetyladenylate (Ac-AMP) and then transfers the acetyl group to tRNA to form ac(4)C34. The polypeptide is tRNA(Met) cytidine acetate ligase (Streptococcus pneumoniae (strain ATCC BAA-255 / R6)).